A 1460-amino-acid polypeptide reads, in one-letter code: CLIP-associating protein 1-A (1460 aa).

HEAT repeat units lie at residues 87 to 124 (TQLG…QASN) and 163 to 200 (LTLS…HVGE). The tract at residues 237 to 293 (SDKNFDDEDSVDGNRPSSASSSASSKAPQTARRGVSLGTARRPGPSSAAAKTGGTAK) is disordered. A compositionally biased stretch (low complexity) spans 279–293 (PGPSSAAAKTGGTAK). HEAT repeat units follow at residues 407-442 (HGAE…IRHT) and 443-479 (HVPR…EWQT). Disordered regions lie at residues 545–605 (SDSI…IDVN), 640–733 (IRTR…RFGI), and 778–800 (PYGM…ERSY). A compositionally biased stretch (low complexity) spans 550–569 (SLPQSDRSSSSSQESLNRPL). Residues 571–597 (TKRSPTGSTVSRASSTTSKSTPGSLQR) are compositionally biased toward polar residues. The span at 645–659 (QSSGSTTSTASTPAD) shows a compositional bias: low complexity. 2 stretches are compositionally biased toward polar residues: residues 669-681 (VSQS…SNSP) and 715-724 (QGCSRETSPS). A compositionally biased stretch (low complexity) spans 789-800 (SDASSACSERSY). The stretch at 942–979 (FIVDQTQTPNLKVKVAILKYIESLARQMDPTDFVNSSE) is one HEAT 5 repeat. Residues 1041-1084 (LKNSSNSSMGSPSNTIGRTPSRHSSSRASPLTSPTNCSHGGLSP) are disordered. The segment covering 1042–1054 (KNSSNSSMGSPSN) has biased composition (low complexity). Positions 1066-1078 (SRASPLTSPTNCS) are enriched in polar residues. HEAT repeat units follow at residues 1272–1309 (LLLE…YAEL) and 1390–1427 (GLLQ…YLAQ).

It belongs to the CLASP family.

The protein localises to the cytoplasm. It localises to the cytoskeleton. It is found in the microtubule organizing center. The protein resides in the centrosome. Its subcellular location is the chromosome. The protein localises to the centromere. It localises to the kinetochore. It is found in the spindle. The protein resides in the golgi apparatus. Its subcellular location is the trans-Golgi network. Functionally, microtubule plus-end tracking protein that promotes the stabilization of dynamic microtubules during anaphase. Plays a crucial role in chromatin-induced microtubule formation. May also act at microtubule minus ends. May be involved in the nucleation of noncentrosomal microtubules originating from the trans-Golgi network (TGN). The chain is CLIP-associating protein 1-A (clasp1-a) from Xenopus laevis (African clawed frog).